Reading from the N-terminus, the 745-residue chain is uncharacterized protein (745 aa).

Positions 158–256 (NQVCDYIELH…HQTPKQYRGD (99 aa)) constitute an HTH araC/xylS-type domain. DNA-binding regions (H-T-H motif) lie at residues 175–196 (SELS…AESL) and 223–246 (ITDI…KHFT).

This is an uncharacterized protein from Staphylococcus aureus (strain MRSA252).